Reading from the N-terminus, the 63-residue chain is uncharacterized protein (63 aa).

Residues 20 to 40 (IVLLISFIFFFGRFIYSSVGA) form a helical membrane-spanning segment.

The protein resides in the membrane. This is an uncharacterized protein from Escherichia coli O157:H7.